Consider the following 386-residue polypeptide: V-type proton ATPase subunit B 2 (386 aa).

This sequence belongs to the ATPase alpha/beta chains family. V-ATPase is a heteromultimeric enzyme composed of a peripheral catalytic V1 complex (main components: subunits A, B, C, D, E, and F) attached to an integral membrane V0 proton pore complex (main component: the proteolipid protein).

Its function is as follows. Non-catalytic subunit of the peripheral V1 complex of vacuolar ATPase. V-ATPase is responsible for acidifying a variety of intracellular compartments in eukaryotic cells. This is V-type proton ATPase subunit B 2 from Gossypium hirsutum (Upland cotton).